We begin with the raw amino-acid sequence, 299 residues long: Nucleotide-binding protein SCO1952 (299 aa).

23–30 (GMSGAGRS) contributes to the ATP binding site. GTP is bound at residue 74 to 77 (DVRG).

The protein belongs to the RapZ-like family.

Functionally, displays ATPase and GTPase activities. This Streptomyces coelicolor (strain ATCC BAA-471 / A3(2) / M145) protein is Nucleotide-binding protein SCO1952.